Here is a 34-residue protein sequence, read N- to C-terminus: Surfactant protein C (34 aa).

C4 carries the S-palmitoyl cysteine lipid modification.

The protein resides in the secreted. It localises to the extracellular space. Its subcellular location is the surface film. Its function is as follows. Pulmonary surfactant associated proteins promote alveolar stability by lowering the surface tension at the air-liquid interface in the peripheral air spaces. The chain is Surfactant protein C (SFTPC) from Canis lupus familiaris (Dog).